We begin with the raw amino-acid sequence, 71 residues long: Glucose-repressible gene protein (71 aa).

The tract at residues 19–71 is disordered; it reads TATASKEANKDVAKDSNQGVGTRLNAAGDAISDKVSENKHDAKAEAHKQGATH. The segment covering 49–71 has biased composition (basic and acidic residues); sequence ISDKVSENKHDAKAEAHKQGATH.

This Neurospora crassa (strain ATCC 24698 / 74-OR23-1A / CBS 708.71 / DSM 1257 / FGSC 987) protein is Glucose-repressible gene protein (grg-1).